The chain runs to 251 residues: ATP synthase subunit a, chloroplastic (251 aa).

A run of 6 helical transmembrane segments spans residues 3 to 23 (IVLL…IANV), 38 to 58 (IHGQ…FLSI), 99 to 119 (VPYI…GALI), 138 to 158 (INTT…AGLN), 203 to 223 (LVVA…LIFL), and 224 to 244 (GLFT…SYIG).

Belongs to the ATPase A chain family. F-type ATPases have 2 components, CF(1) - the catalytic core - and CF(0) - the membrane proton channel. CF(1) has five subunits: alpha(3), beta(3), gamma(1), delta(1), epsilon(1). CF(0) has four main subunits: a, b, b' and c.

The protein resides in the plastid. It localises to the chloroplast thylakoid membrane. Key component of the proton channel; it plays a direct role in the translocation of protons across the membrane. The sequence is that of ATP synthase subunit a, chloroplastic from Euglena gracilis.